We begin with the raw amino-acid sequence, 537 residues long: Inositol phosphorylceramide glucuronosyltransferase 1 (537 aa).

Residues 6 to 26 traverse the membrane as a helical segment; the sequence is TSLWVLLLALVSIQLNGSFGS. Residues aspartate 124 and aspartate 126 each coordinate Mn(2+). Residues 124 to 126, 153 to 155, 180 to 184, and 248 to 255 contribute to the substrate site; these read DAD, NSG, TGGDQ, and HYTLGPLK. Histidine 248 lines the Mn(2+) pocket. A run of 5 helical transmembrane segments spans residues 293–313, 375–395, 406–426, 468–488, and 494–514; these read DELVVKFLFLLPLCALLFCIY, VSVVVCFTAVLLSLGISFAIV, VLVYEWTFTIFFLLFGVFLLF, MAFLAIAAVSLPYILGITALF, and MVGLAIILAAFMTYASEHLAV.

Belongs to the glycosyltransferase 8 family. Glycogenin subfamily. It depends on Mn(2+) as a cofactor. As to expression, expressed in seedlings, roots, leaves, stems and siliques.

It is found in the golgi apparatus membrane. It carries out the reaction glucuronate acceptor + UDP-alpha-D-glucuronate = acceptor beta-D-glucuronoside + UDP + H(+). It catalyses the reaction a 1D-myo-inositol-1-phospho-N-[(R)-2-hydroxy-very-long-chain fatty acyl]-(R)-4-hydroxysphingoid base + UDP-alpha-D-glucuronate = an alpha-D-glucuronosyl-(1&lt;-&gt;6)-1D-myo-inositol-1-phospho-N-[(R)-2-hydroxy-very-long-chain fatty acyl]-(R)-4-hydroxysphingoid base + UDP + H(+). Its pathway is sphingolipid metabolism. Mediates the transfer of glucuronic acid (GlcA) from UDP-GlcA to glycosyl inositol phosphorylceramides (GIPCs). The formation of GIPCs sphingolipids is essential for pollen function, plant growth and defense. Required for global fitness. In Arabidopsis thaliana (Mouse-ear cress), this protein is Inositol phosphorylceramide glucuronosyltransferase 1.